The chain runs to 95 residues: Co-chaperonin GroES (95 aa).

It belongs to the GroES chaperonin family. As to quaternary structure, heptamer of 7 subunits arranged in a ring. Interacts with the chaperonin GroEL.

It localises to the cytoplasm. In terms of biological role, together with the chaperonin GroEL, plays an essential role in assisting protein folding. The GroEL-GroES system forms a nano-cage that allows encapsulation of the non-native substrate proteins and provides a physical environment optimized to promote and accelerate protein folding. GroES binds to the apical surface of the GroEL ring, thereby capping the opening of the GroEL channel. This Clostridium botulinum (strain ATCC 19397 / Type A) protein is Co-chaperonin GroES.